The primary structure comprises 172 residues: Translationally-controlled tumor protein homolog (172 aa).

A TCTP domain is found at 1–172; the sequence is MIIYRDCISQ…FKDGLEMEKC (172 aa).

It belongs to the TCTP family. In terms of tissue distribution, expressed by the venom gland.

It localises to the secreted. Functionally, venom protein that causes edema, enhances vascular permeability and is likely related to the inflammatory activity of the venom. The protein is Translationally-controlled tumor protein homolog of Crotalus adamanteus (Eastern diamondback rattlesnake).